Consider the following 365-residue polypeptide: P2Y purinoceptor 4 (365 aa).

At Met1 to Lys34 the chain is on the extracellular side. Residues Phe35–Ile61 form a helical membrane-spanning segment. The Cytoplasmic portion of the chain corresponds to Phe62–Thr72. A helical transmembrane segment spans residues Tyr73–Tyr95. The Extracellular segment spans residues Ala96–Arg112. Cys108 and Cys185 are disulfide-bonded. The helical transmembrane segment at Phe113 to Val131 threads the bilayer. At His132 to Leu154 the chain is on the cytoplasmic side. A helical membrane pass occupies residues Leu155 to Val174. At Thr175–His196 the chain is on the extracellular side. Residues Tyr197–Leu222 form a helical membrane-spanning segment. The Cytoplasmic segment spans residues Met223–Thr246. A helical transmembrane segment spans residues Ile247–Tyr269. The Extracellular portion of the chain corresponds to Leu270–Val287. A helical transmembrane segment spans residues Tyr288–Thr309. Topologically, residues Gly310–Leu365 are cytoplasmic. Residues Ser333 and Ser334 each carry the phosphoserine modification.

This sequence belongs to the G-protein coupled receptor 1 family. In terms of processing, phosphorylation of Ser-333 and Ser-334 is a key step in agonist-dependent desensitization and loss of surface P2RY4. This phosphorylation does not involve PKC, nor other calcium activated kinases. As to expression, pancreas.

The protein localises to the cell membrane. Functionally, receptor for UTP and UDP coupled to G-proteins that activate a phosphatidylinositol-calcium second messenger system. Not activated by ATP or ADP. The sequence is that of P2Y purinoceptor 4 (P2RY4) from Homo sapiens (Human).